The primary structure comprises 435 residues: GTPase Der (435 aa).

2 consecutive EngA-type G domains span residues 4–167 (GIVA…PSHE) and 175–350 (TRVS…TALD). Residues 10-17 (GRPNVGKS), 57-61 (DTGGI), 119-122 (NKYD), 181-188 (GRPNVGKS), 228-232 (DTAGI), and 293-296 (NKWD) each bind GTP. The KH-like domain maps to 351–435 (KKIKTSVFNE…PMSIIFRERK (85 aa)).

The protein belongs to the TRAFAC class TrmE-Era-EngA-EngB-Septin-like GTPase superfamily. EngA (Der) GTPase family. As to quaternary structure, associates with the 50S ribosomal subunit.

Functionally, GTPase that plays an essential role in the late steps of ribosome biogenesis. This is GTPase Der from Mesoplasma florum (strain ATCC 33453 / NBRC 100688 / NCTC 11704 / L1) (Acholeplasma florum).